Here is a 535-residue protein sequence, read N- to C-terminus: Lecithin-cholesterol acyltransferase-like 4 (535 aa).

S2 bears the N-acetylserine mark. S182 serves as the catalytic Acyl-ester intermediate. Active-site charge relay system residues include D391 and H416. The segment covering 488-505 (STVNSISVSQPGDDQNPQ) has biased composition (polar residues). The tract at residues 488–507 (STVNSISVSQPGDDQNPQAE) is disordered.

This sequence belongs to the AB hydrolase superfamily. Lipase family.

In Arabidopsis thaliana (Mouse-ear cress), this protein is Lecithin-cholesterol acyltransferase-like 4 (LCAT4).